Here is a 107-residue protein sequence, read N- to C-terminus: Replication initiation control protein YabA (107 aa).

4 residues coordinate Zn(2+): H81, C83, C97, and C100.

Belongs to the YabA family. In terms of assembly, homotetramer. Interacts with both DnaA and DnaN, acting as a bridge between these two proteins. It depends on Zn(2+) as a cofactor.

Its subcellular location is the cytoplasm. The protein localises to the nucleoid. In terms of biological role, involved in control of chromosome replication initiation. Inhibits the cooperative binding of DnaA to the oriC region, thus negatively regulating initiation of chromosome replication. Inhibits the ability of DnaA-ATP to form a helix on DNA; does not disassemble preformed DnaA-DNA helices. Decreases the residence time of DnaA on the chromosome at its binding sites (oriC, replication forks and promoter-binding sites). Tethers DnaA to the replication machinery via the DNA polymerase beta sliding clamp subunit (dnaN). Associates with oriC and other DnaA targets on the chromosome in a DnaA-dependent manner. The chain is Replication initiation control protein YabA from Streptococcus pyogenes serotype M1.